A 215-amino-acid polypeptide reads, in one-letter code: 3-isopropylmalate dehydratase small subunit (215 aa).

Belongs to the LeuD family. LeuD type 1 subfamily. Heterodimer of LeuC and LeuD.

It carries out the reaction (2R,3S)-3-isopropylmalate = (2S)-2-isopropylmalate. It functions in the pathway amino-acid biosynthesis; L-leucine biosynthesis; L-leucine from 3-methyl-2-oxobutanoate: step 2/4. Functionally, catalyzes the isomerization between 2-isopropylmalate and 3-isopropylmalate, via the formation of 2-isopropylmaleate. This Leptothrix cholodnii (strain ATCC 51168 / LMG 8142 / SP-6) (Leptothrix discophora (strain SP-6)) protein is 3-isopropylmalate dehydratase small subunit.